The chain runs to 341 residues: Ketol-acid reductoisomerase (NADP(+)) (341 aa).

The region spanning 2-182 is the KARI N-terminal Rossmann domain; it reads TDIVYDKDAD…GGLRAGGIRT (181 aa). NADP(+) is bound by residues 25 to 28, K48, S51, S53, and 83 to 86; these read YGSQ and DQHQ. H108 is a catalytic residue. Residue G134 coordinates NADP(+). One can recognise a KARI C-terminal knotted domain in the interval 183 to 328; it reads TFTEETETDL…RELRKLFAWN (146 aa). Residues D191, E195, E227, and E231 each contribute to the Mg(2+) site. S252 is a substrate binding site.

Belongs to the ketol-acid reductoisomerase family. The cofactor is Mg(2+).

The catalysed reaction is (2R)-2,3-dihydroxy-3-methylbutanoate + NADP(+) = (2S)-2-acetolactate + NADPH + H(+). It carries out the reaction (2R,3R)-2,3-dihydroxy-3-methylpentanoate + NADP(+) = (S)-2-ethyl-2-hydroxy-3-oxobutanoate + NADPH + H(+). It participates in amino-acid biosynthesis; L-isoleucine biosynthesis; L-isoleucine from 2-oxobutanoate: step 2/4. The protein operates within amino-acid biosynthesis; L-valine biosynthesis; L-valine from pyruvate: step 2/4. Involved in the biosynthesis of branched-chain amino acids (BCAA). Catalyzes an alkyl-migration followed by a ketol-acid reduction of (S)-2-acetolactate (S2AL) to yield (R)-2,3-dihydroxy-isovalerate. In the isomerase reaction, S2AL is rearranged via a Mg-dependent methyl migration to produce 3-hydroxy-3-methyl-2-ketobutyrate (HMKB). In the reductase reaction, this 2-ketoacid undergoes a metal-dependent reduction by NADPH to yield (R)-2,3-dihydroxy-isovalerate. The protein is Ketol-acid reductoisomerase (NADP(+)) of Clavibacter sepedonicus (Clavibacter michiganensis subsp. sepedonicus).